Reading from the N-terminus, the 525-residue chain is uncharacterized protein (525 aa).

The first 21 residues, 1-21, serve as a signal peptide directing secretion; the sequence is MLECLSALLVLFAGGGGSVLA. Residues 22–448 are Extracellular-facing; sequence AVQSKTVADP…ISAASQLDER (427 aa). The segment at 242 to 264 is disordered; that stretch reads KVSSENCSKDTDDKSGSKKERNT. A helical transmembrane segment spans residues 449 to 469; that stretch reads IFIFTAITVSITTLMMLGFSY. The Cytoplasmic segment spans residues 470 to 525; it reads RSRVSFRDHSIDDSDDDNDWSDDEVEFDEEYFYSLPVSIPEKGISLDKMAQQLGVE.

It is found in the membrane. This is an uncharacterized protein from Saccharomyces cerevisiae (strain RM11-1a) (Baker's yeast).